Here is a 587-residue protein sequence, read N- to C-terminus: Aspartate--tRNA ligase (587 aa).

Residue glutamate 174 participates in L-aspartate binding. The segment at 198 to 201 is aspartate; that stretch reads QITK. Residue arginine 220 participates in L-aspartate binding. ATP-binding positions include 220 to 222 and glutamine 229; that span reads RDE. Histidine 443 contributes to the L-aspartate binding site. Glutamate 477 is a binding site for ATP. An L-aspartate-binding site is contributed by arginine 484. 529–532 serves as a coordination point for ATP; it reads GLDR.

Belongs to the class-II aminoacyl-tRNA synthetase family. Type 1 subfamily. As to quaternary structure, homodimer.

The protein localises to the cytoplasm. It carries out the reaction tRNA(Asp) + L-aspartate + ATP = L-aspartyl-tRNA(Asp) + AMP + diphosphate. Its function is as follows. Catalyzes the attachment of L-aspartate to tRNA(Asp) in a two-step reaction: L-aspartate is first activated by ATP to form Asp-AMP and then transferred to the acceptor end of tRNA(Asp). The sequence is that of Aspartate--tRNA ligase from Streptococcus pneumoniae serotype 4 (strain ATCC BAA-334 / TIGR4).